The chain runs to 507 residues: ATP synthase subunit alpha, chloroplastic (507 aa).

Position 170–177 (170–177) interacts with ATP; it reads GDRQTGKT.

It belongs to the ATPase alpha/beta chains family. As to quaternary structure, F-type ATPases have 2 components, CF(1) - the catalytic core - and CF(0) - the membrane proton channel. CF(1) has five subunits: alpha(3), beta(3), gamma(1), delta(1), epsilon(1). CF(0) has four main subunits: a, b, b' and c.

The protein localises to the plastid. The protein resides in the chloroplast thylakoid membrane. It catalyses the reaction ATP + H2O + 4 H(+)(in) = ADP + phosphate + 5 H(+)(out). Produces ATP from ADP in the presence of a proton gradient across the membrane. The alpha chain is a regulatory subunit. The sequence is that of ATP synthase subunit alpha, chloroplastic from Piper cenocladum (Ant piper).